We begin with the raw amino-acid sequence, 257 residues long: 5'-nucleotidase SurE (257 aa).

Positions 9, 10, 40, and 92 each coordinate a divalent metal cation.

This sequence belongs to the SurE nucleotidase family. A divalent metal cation is required as a cofactor.

It localises to the cytoplasm. The catalysed reaction is a ribonucleoside 5'-phosphate + H2O = a ribonucleoside + phosphate. Nucleotidase that shows phosphatase activity on nucleoside 5'-monophosphates. This is 5'-nucleotidase SurE from Alkalilimnicola ehrlichii (strain ATCC BAA-1101 / DSM 17681 / MLHE-1).